We begin with the raw amino-acid sequence, 120 residues long: Prophage bactoprenol-linked glucose translocase homolog (120 aa).

Over 1–9 (MLKLFAKYT) the chain is Cytoplasmic. Residues 10-30 (SIGVLNTLIHWVVFGVCIYVA) form a helical membrane-spanning segment. At 31 to 33 (HTN) the chain is on the periplasmic side. The helical transmembrane segment at 34 to 54 (QALANFAGFVVAVSFSFFANA) threads the bilayer. The Cytoplasmic segment spans residues 55–64 (KFTFKASTTT). Residues 65–85 (MRYMLYVGFMGTLSATVGWAA) traverse the membrane as a helical segment. Topologically, residues 86–88 (DRC) are periplasmic. The chain crosses the membrane as a helical span at residues 89 to 109 (ALPPMITLVTFSAISLVCGFV). Residues 110–120 (YSKFIVFRDAK) lie on the Cytoplasmic side of the membrane.

Belongs to the GtrA family.

The protein localises to the cell inner membrane. Functionally, involved in O antigen modification. Involved in the translocation of bactoprenol-linked glucose across the cytoplasmic membrane. This Escherichia coli (strain K12) protein is Prophage bactoprenol-linked glucose translocase homolog (yfdG).